The sequence spans 300 residues: Protoheme IX farnesyltransferase (300 aa).

The next 9 membrane-spanning stretches (helical) occupy residues 28–48 (VVAL…PTIL), 50–70 (VQPL…AAAL), 100–120 (ALIF…VFTN), 122–142 (LTAW…TAYL), 149–169 (NIVI…TAVT), 176–196 (ALLL…ALAI), 222–242 (CILL…LVGM), 243–263 (SGPL…YKAW), and 280–300 (FSIY…YLWA).

It belongs to the UbiA prenyltransferase family. Protoheme IX farnesyltransferase subfamily.

It is found in the cell inner membrane. The catalysed reaction is heme b + (2E,6E)-farnesyl diphosphate + H2O = Fe(II)-heme o + diphosphate. It participates in porphyrin-containing compound metabolism; heme O biosynthesis; heme O from protoheme: step 1/1. In terms of biological role, converts heme B (protoheme IX) to heme O by substitution of the vinyl group on carbon 2 of heme B porphyrin ring with a hydroxyethyl farnesyl side group. The sequence is that of Protoheme IX farnesyltransferase from Shewanella oneidensis (strain ATCC 700550 / JCM 31522 / CIP 106686 / LMG 19005 / NCIMB 14063 / MR-1).